The following is a 361-amino-acid chain: Ribosomal RNA large subunit methyltransferase M (361 aa).

Residues S187, 220–223 (CPGG), D239, D259, and D276 contribute to the S-adenosyl-L-methionine site. The Proton acceptor role is filled by K305.

It belongs to the class I-like SAM-binding methyltransferase superfamily. RNA methyltransferase RlmE family. RlmM subfamily. Monomer.

The protein localises to the cytoplasm. The catalysed reaction is cytidine(2498) in 23S rRNA + S-adenosyl-L-methionine = 2'-O-methylcytidine(2498) in 23S rRNA + S-adenosyl-L-homocysteine + H(+). In terms of biological role, catalyzes the 2'-O-methylation at nucleotide C2498 in 23S rRNA. This chain is Ribosomal RNA large subunit methyltransferase M, found in Shewanella sp. (strain W3-18-1).